We begin with the raw amino-acid sequence, 394 residues long: Elongation factor Tu 1 (394 aa).

The tr-type G domain occupies 9 to 204 (KPHCNIGTIG…AIDDYIPQPT (196 aa)). A G1 region spans residues 18–25 (GHVDHGKT). 18-25 (GHVDHGKT) contacts GTP. T25 is a binding site for Mg(2+). The G2 stretch occupies residues 61 to 65 (GITIQ). The interval 82 to 85 (DCPG) is G3. GTP is bound by residues 82–86 (DCPGH) and 137–140 (NKID). Residues 137 to 140 (NKID) form a G4 region. Residues 174 to 176 (SAL) form a G5 region.

The protein belongs to the TRAFAC class translation factor GTPase superfamily. Classic translation factor GTPase family. EF-Tu/EF-1A subfamily. As to quaternary structure, monomer.

It localises to the cytoplasm. The enzyme catalyses GTP + H2O = GDP + phosphate + H(+). GTP hydrolase that promotes the GTP-dependent binding of aminoacyl-tRNA to the A-site of ribosomes during protein biosynthesis. The sequence is that of Elongation factor Tu 1 from Orientia tsutsugamushi (strain Boryong) (Rickettsia tsutsugamushi).